The chain runs to 366 residues: MAAARHSTLDFKLGAKADGEAILKGLQSIFQEQGMTESVHTWQDHGYLATYTNKNGSFANLRIYPHGLVLLDLQSYDSDVQGKQETDSLLNKIEEKMKELSQDSTGRVKRLPPIVRGGAIDRYWPTADGRLVEYDIDEVVYDEDSPYQNIKILHSKQFGNILILSGDVNLAESDLAYTRAIMGSGKEDYTGKDVLILGGGDGGILCEIVKLKPKMVTMVEIDQMVIDGCKKYMRRTCGDVLDNLRGDCYQVLIEDCIPVLKMYAKEGREFDYVINDLTAVPISTSPEEDSTWDFLRLILDLSMKVLKQDGKYFTQGNCVNLTEALSLYEEQLGRLYCPVEFSKEIVCVPSYLELWVFYTVWKKAKP.

Alanine 2 bears the N-acetylalanine mark. Serine 57 bears the Phosphoserine mark. One can recognise a PABS domain in the interval 122–362 (RYWPTADGRL…ELWVFYTVWK (241 aa)). Position 148 (glutamine 148) interacts with S-adenosyl 3-(methylsulfanyl)propylamine. Residues tyrosine 177 and aspartate 201 each contribute to the spermidine site. S-adenosyl 3-(methylsulfanyl)propylamine contacts are provided by residues glutamate 220 and 255 to 256 (DC). Aspartate 276 (proton acceptor) is an active-site residue. Spermidine contacts are provided by tyrosine 351 and glutamate 353.

Belongs to the spermidine/spermine synthase family. In terms of assembly, homodimer. Dimerization is mediated through the N-terminal domain and seems to be required for activity as deletion of the N-terminal domain causes complete loss of activity.

The enzyme catalyses S-adenosyl 3-(methylsulfanyl)propylamine + spermidine = spermine + S-methyl-5'-thioadenosine + H(+). It participates in amine and polyamine biosynthesis; spermine biosynthesis; spermine from spermidine: step 1/1. In terms of biological role, catalyzes the production of spermine from spermidine and decarboxylated S-adenosylmethionine (dcSAM). Required for normal viability, growth and fertility. In Mus musculus (Mouse), this protein is Spermine synthase (Sms).